Reading from the N-terminus, the 202-residue chain is Putative transposon Tn552 DNA-invertase bin3 (202 aa).

A Resolvase/invertase-type recombinase catalytic domain is found at 1–143 (MIIGYARVSS…QGIQVAKEKG (143 aa)). Serine 9 serves as the catalytic O-(5'-phospho-DNA)-serine intermediate.

Belongs to the site-specific recombinase resolvase family.

In terms of biological role, potential DNA invertase. This is Putative transposon Tn552 DNA-invertase bin3 (bin3) from Staphylococcus aureus.